We begin with the raw amino-acid sequence, 213 residues long: Protein FAM177A1 (213 aa).

An N-acetylmethionine modification is found at M1. Position 70 is a phosphoserine (S70). T71 bears the Phosphothreonine mark. The stretch at 136–173 (IDEYYRMKKEEEEEEEENRMSEEAEKQYQQNKLQTDSI) forms a coiled coil. Residues 147 to 175 (EEEEEENRMSEEAEKQYQQNKLQTDSIVQ) form a disordered region. A compositionally biased stretch (polar residues) spans 162–175 (QYQQNKLQTDSIVQ).

This sequence belongs to the FAM177 family.

This Homo sapiens (Human) protein is Protein FAM177A1 (FAM177A1).